The primary structure comprises 214 residues: Pyridoxine/pyridoxamine 5'-phosphate oxidase (214 aa).

Substrate-binding positions include 8 to 11 (RKSY) and Lys67. Residues 62–67 (RVVLLK), 77–78 (YT), Lys84, and Gln106 contribute to the FMN site. 3 residues coordinate substrate: Tyr124, Arg128, and Ser132. FMN-binding positions include 141–142 (QS) and Trp186. 192–194 (RLH) is a binding site for substrate. Residue Arg196 participates in FMN binding.

This sequence belongs to the pyridoxamine 5'-phosphate oxidase family. As to quaternary structure, homodimer. FMN serves as cofactor.

It carries out the reaction pyridoxamine 5'-phosphate + O2 + H2O = pyridoxal 5'-phosphate + H2O2 + NH4(+). The catalysed reaction is pyridoxine 5'-phosphate + O2 = pyridoxal 5'-phosphate + H2O2. It participates in cofactor metabolism; pyridoxal 5'-phosphate salvage; pyridoxal 5'-phosphate from pyridoxamine 5'-phosphate: step 1/1. The protein operates within cofactor metabolism; pyridoxal 5'-phosphate salvage; pyridoxal 5'-phosphate from pyridoxine 5'-phosphate: step 1/1. Functionally, catalyzes the oxidation of either pyridoxine 5'-phosphate (PNP) or pyridoxamine 5'-phosphate (PMP) into pyridoxal 5'-phosphate (PLP). The sequence is that of Pyridoxine/pyridoxamine 5'-phosphate oxidase from Flavobacterium psychrophilum (strain ATCC 49511 / DSM 21280 / CIP 103535 / JIP02/86).